A 382-amino-acid polypeptide reads, in one-letter code: Guanine nucleotide-binding protein G(s) subunit alpha (382 aa).

Positions 1 to 14 are enriched in polar residues; the sequence is MGCFGSPTSKQSDV. A disordered region spans residues 1–31; that stretch reads MGCFGSPTSKQSDVNSEDSKSQKRRSDAISR. Gly2 carries the N-palmitoyl glycine lipid modification. Residue Cys3 is the site of S-palmitoyl cysteine attachment. The segment covering 17 to 31 has biased composition (basic and acidic residues); it reads EDSKSQKRRSDAISR. The 341-residue stretch at 42–382 folds into the G-alpha domain; that stretch reads ATHRLLLLGA…RMHLRQYELL (341 aa). A G1 motif region spans residues 45 to 58; it reads RLLLLGAGESGKST. Residues 50 to 57, 51 to 58, 186 to 192, 211 to 215, 212 to 216, 280 to 283, 281 to 284, and Ala354 each bind GTP; these read GAGESGKS, AGESGKST, LRCRVLT, DVGGQ, VGGQR, NKQD, and KQDL. Ser57 and Thr192 together coordinate Mg(2+). The tract at residues 184–192 is G2 motif; the sequence is DILRCRVLT. Residues 207-216 form a G3 motif region; it reads FHMFDVGGQR. A G4 motif region spans residues 276–283; sequence ILFLNKQD. A G5 motif region spans residues 352–357; sequence TCAVDT.

Belongs to the G-alpha family. G(s) subfamily. G proteins are composed of 3 units; alpha, beta and gamma. The alpha chain contains the guanine nucleotide binding site.

Functionally, guanine nucleotide-binding proteins (G proteins) are involved as modulators or transducers in various transmembrane signaling systems. The G(s) protein is involved in hormonal regulation of adenylate cyclase: it activates the cyclase. The protein is Guanine nucleotide-binding protein G(s) subunit alpha (G-salpha60A) of Drosophila pseudoobscura pseudoobscura (Fruit fly).